A 577-amino-acid polypeptide reads, in one-letter code: Methionine--tRNA ligase, mitochondrial (577 aa).

Positions 25–37 match the 'HIGH' region motif; that stretch reads PIFYVNAAPHIGH. Positions 329-333 match the 'KMSKS' region motif; it reads KMSKS. K332 serves as a coordination point for ATP.

Belongs to the class-I aminoacyl-tRNA synthetase family.

It is found in the mitochondrion matrix. It carries out the reaction tRNA(Met) + L-methionine + ATP = L-methionyl-tRNA(Met) + AMP + diphosphate. The polypeptide is Methionine--tRNA ligase, mitochondrial (MSM1) (Candida albicans (Yeast)).